Here is a 270-residue protein sequence, read N- to C-terminus: Putative envelope-preserving system protein Rv2743c (270 aa).

2 consecutive transmembrane segments (helical) span residues 50–72 (ALRW…ALLA) and 77–99 (FTSL…TLLL).

Interacts with PspA and Rv2742c.

Its subcellular location is the membrane. Its function is as follows. Involved in preservation of envelope integrity and tolerance to surface stress. Reverses the inhibitory effect of PspA on ClgR activity. Facilitates intracellular growth of M.tuberculosis. The protein is Putative envelope-preserving system protein Rv2743c of Mycobacterium tuberculosis (strain ATCC 25618 / H37Rv).